Reading from the N-terminus, the 62-residue chain is Large ribosomal subunit protein bL28 (62 aa).

It belongs to the bacterial ribosomal protein bL28 family.

This chain is Large ribosomal subunit protein bL28, found in Streptococcus uberis (strain ATCC BAA-854 / 0140J).